The chain runs to 141 residues: Hemoglobin subunit beta-C (141 aa).

The Globin domain maps to 1–141; the sequence is PNKALITGFW…VASALAHRYH (141 aa). The heme b site is built by His58 and His87.

The protein belongs to the globin family. As to quaternary structure, heterotetramer of two alpha chains and two beta chains. In terms of tissue distribution, red blood cells.

In terms of biological role, involved in oxygen transport from the lung to the various peripheral tissues. The chain is Hemoglobin subunit beta-C from Ammotragus lervia (Barbary sheep).